Consider the following 191-residue polypeptide: Cell division protein SepF (191 aa).

Residues 150 to 164 (TSSSPEEASPSSVST) are compositionally biased toward low complexity. A disordered region spans residues 150–191 (TSSSPEEASPSSVSTENTPQYSLGKNTTPEPAWGNSKLSAYS). The segment covering 165 to 178 (ENTPQYSLGKNTTP) has biased composition (polar residues).

This sequence belongs to the SepF family. In terms of assembly, homodimer. Interacts with FtsZ.

Its subcellular location is the cytoplasm. Its function is as follows. Cell division protein that is part of the divisome complex and is recruited early to the Z-ring. Probably stimulates Z-ring formation, perhaps through the cross-linking of FtsZ protofilaments. Its function overlaps with FtsA. This chain is Cell division protein SepF, found in Prochlorococcus marinus (strain AS9601).